We begin with the raw amino-acid sequence, 116 residues long: UPF0102 protein PERMA_0362 (116 aa).

The protein belongs to the UPF0102 family.

The polypeptide is UPF0102 protein PERMA_0362 (Persephonella marina (strain DSM 14350 / EX-H1)).